Consider the following 490-residue polypeptide: Cysteine--tRNA ligase (490 aa).

Zn(2+) is bound at residue C43. The 'HIGH' region signature appears at 45–55 (MTVQSSPHLGH). Residues 177-204 (VDEMSPAEDSDPRGKRDPRDFALWKGHK) form a disordered region. The segment covering 186 to 204 (SDPRGKRDPRDFALWKGHK) has biased composition (basic and acidic residues). C228, H253, and E257 together coordinate Zn(2+). The 'KMSKS' region signature appears at 284 to 288 (KMSKS). Residue K287 participates in ATP binding.

The protein belongs to the class-I aminoacyl-tRNA synthetase family. Monomer. Zn(2+) is required as a cofactor.

It is found in the cytoplasm. The catalysed reaction is tRNA(Cys) + L-cysteine + ATP = L-cysteinyl-tRNA(Cys) + AMP + diphosphate. The sequence is that of Cysteine--tRNA ligase from Cutibacterium acnes (strain DSM 16379 / KPA171202) (Propionibacterium acnes).